The sequence spans 259 residues: MIQIHALPAFNDNYIWLLQDLSSQQCAVVDPGDAKPVLGWLTEHPDYRLTDILITHHHNDHVGGVAELKQATRARVLGPAAETIPARDVALVDHDRLTVLGLEFVVHAVPGHTLGHIAFYHEDATTPLLFSGDTLFAAGCGRLFEGTPEQMHDSLERLAKLPDSTLIYCAHEYTLSNLRFAQAVEPDNQDIAQRLAEVIRWRSENRISLPSNLALEKRTNPFLRTRETSVKEKADERSSGQNTSQSAVFASLRAWKDKF.

His-56, His-58, Asp-60, His-61, His-112, Asp-133, and His-171 together coordinate Zn(2+). Residues 224–238 (RTRETSVKEKADERS) are compositionally biased toward basic and acidic residues. A disordered region spans residues 224-245 (RTRETSVKEKADERSSGQNTSQ).

It belongs to the metallo-beta-lactamase superfamily. Glyoxalase II family. Monomer. Requires Zn(2+) as cofactor.

It catalyses the reaction an S-(2-hydroxyacyl)glutathione + H2O = a 2-hydroxy carboxylate + glutathione + H(+). Its pathway is secondary metabolite metabolism; methylglyoxal degradation; (R)-lactate from methylglyoxal: step 2/2. Its function is as follows. Thiolesterase that catalyzes the hydrolysis of S-D-lactoyl-glutathione to form glutathione and D-lactic acid. The polypeptide is Hydroxyacylglutathione hydrolase (Pseudomonas savastanoi pv. phaseolicola (strain 1448A / Race 6) (Pseudomonas syringae pv. phaseolicola (strain 1448A / Race 6))).